We begin with the raw amino-acid sequence, 558 residues long: MAELRSNMITQGIDRAPHRSLLRAAGVKEEDFGKPFIAVCNSYIDIVPGHVHLQEFGKIVKEAIREAGGVPFEFNTIGVDDGIAMGHIGMRYSLPSREIIADSVETVVSAHWFDGMVCIPNCDKITPGMLMAAMRINIPTIFVSGGPMAAGRTSDGRKISLSSVFEGVGAYQAGKINENELQELEQFGCPTCGSCSGMFTANSMNCLSEALGLALPGNGTILATSPERKEFVRKSAAQLMETIRKDIKPRDIVTVKAIDNAFALDMALGGSTNTVLHTLALANEAGVEYSLERINEVAERVPHLAKLAPASDVFIEDLHEAGGVSAALNELSKKEGALHLDALTVTGKTLGETIAGHEVKDYDVIHPLDQPFTEKGGLAVLFGNLAPDGAIIKTGGVQNGITRHEGPAVVFDSQDEALDGIINRKVKEGDVVIIRYEGPKGGPGMPEMLAPTSQIVGMGLGPKVALITDGRFSGASRGLSIGHVSPEAAEGGPLAFVENGDHIIVDIEKRILDVQVPEEEWEKRKANWKGFEPKVKTGYLARYSKLVTSANTGGIMKI.

Position 81 (D81) interacts with Mg(2+). C122 is a binding site for [2Fe-2S] cluster. Residues D123 and K124 each contribute to the Mg(2+) site. K124 carries the post-translational modification N6-carboxylysine. C195 lines the [2Fe-2S] cluster pocket. E447 provides a ligand contact to Mg(2+). The active-site Proton acceptor is the S473.

This sequence belongs to the IlvD/Edd family. As to quaternary structure, homodimer. The cofactor is [2Fe-2S] cluster. It depends on Mg(2+) as a cofactor.

It carries out the reaction (2R)-2,3-dihydroxy-3-methylbutanoate = 3-methyl-2-oxobutanoate + H2O. The catalysed reaction is (2R,3R)-2,3-dihydroxy-3-methylpentanoate = (S)-3-methyl-2-oxopentanoate + H2O. It functions in the pathway amino-acid biosynthesis; L-isoleucine biosynthesis; L-isoleucine from 2-oxobutanoate: step 3/4. Its pathway is amino-acid biosynthesis; L-valine biosynthesis; L-valine from pyruvate: step 3/4. Its function is as follows. Functions in the biosynthesis of branched-chain amino acids. Catalyzes the dehydration of (2R,3R)-2,3-dihydroxy-3-methylpentanoate (2,3-dihydroxy-3-methylvalerate) into 2-oxo-3-methylpentanoate (2-oxo-3-methylvalerate) and of (2R)-2,3-dihydroxy-3-methylbutanoate (2,3-dihydroxyisovalerate) into 2-oxo-3-methylbutanoate (2-oxoisovalerate), the penultimate precursor to L-isoleucine and L-valine, respectively. The chain is Dihydroxy-acid dehydratase from Bacillus subtilis (strain 168).